We begin with the raw amino-acid sequence, 318 residues long: D-alanine--D-alanine ligase (318 aa).

Positions 117 to 315 constitute an ATP-grasp domain; it reads KQVWLSLGLS…FETLVWRVLE (199 aa). 146–201 lines the ATP pocket; the sequence is ARQIGLPIIVKPANEGSSVGVSRVFDQAQLEEAVTLAARYDGALLMEQLIEGDELT. Positions 268, 282, and 284 each coordinate Mg(2+).

Belongs to the D-alanine--D-alanine ligase family. Mg(2+) serves as cofactor. Requires Mn(2+) as cofactor.

Its subcellular location is the cytoplasm. The catalysed reaction is 2 D-alanine + ATP = D-alanyl-D-alanine + ADP + phosphate + H(+). The protein operates within cell wall biogenesis; peptidoglycan biosynthesis. In terms of biological role, cell wall formation. This Xanthomonas axonopodis pv. citri (strain 306) protein is D-alanine--D-alanine ligase.